Consider the following 409-residue polypeptide: Peptidase T (409 aa).

A Zn(2+)-binding site is contributed by His78. Residue Asp80 is part of the active site. Asp140 contacts Zn(2+). Glu174 serves as the catalytic Proton acceptor. Zn(2+) is bound by residues Glu175, Asp197, and His379.

It belongs to the peptidase M20B family. It depends on Zn(2+) as a cofactor.

Its subcellular location is the cytoplasm. The catalysed reaction is Release of the N-terminal residue from a tripeptide.. In terms of biological role, cleaves the N-terminal amino acid of tripeptides. The protein is Peptidase T of Vibrio parahaemolyticus serotype O3:K6 (strain RIMD 2210633).